Reading from the N-terminus, the 456-residue chain is IQ domain-containing protein IQM3 (456 aa).

The IQ domain occupies 46–75 (TRLAAVKVQKVYRSYRTRRRLADSVVVAEE). The segment at 315 to 358 (SEDSDSYDDYVKSNGGSEPEPLKKEDTTFQAETETDENGNGTVG) is disordered.

In terms of tissue distribution, expressed in roots, rosette and cauline leaves, flowers and siliques, and at lower levels in stems.

It is found in the cytoplasm. The protein localises to the nucleus. Its function is as follows. May be involved in biotic and abiotic stress responses. The polypeptide is IQ domain-containing protein IQM3 (Arabidopsis thaliana (Mouse-ear cress)).